The following is a 120-amino-acid chain: Late histone H2A.2.2 (120 aa).

Positions 1-18 (MSGRGKGAKSKSKAKSRS) are enriched in basic residues. Residues 1–22 (MSGRGKGAKSKSKAKSRSSRAG) are disordered. Serine 2 carries the post-translational modification N-acetylserine. A Phosphoserine modification is found at serine 2. Residue glutamine 104 is modified to N5-methylglutamine. Lysine 119 participates in a covalent cross-link: Glycyl lysine isopeptide (Lys-Gly) (interchain with G-Cter in ubiquitin).

This sequence belongs to the histone H2A family. As to quaternary structure, the nucleosome is a histone octamer containing two molecules each of H2A, H2B, H3 and H4 assembled in one H3-H4 heterotetramer and two H2A-H2B heterodimers. The octamer wraps approximately 147 bp of DNA. Monoubiquitination of Lys-119 gives a specific tag for epigenetic transcriptional repression. Post-translationally, phosphorylation of Ser-2 directly represses transcription.

Its subcellular location is the nucleus. It localises to the chromosome. Its function is as follows. Core component of nucleosome. Nucleosomes wrap and compact DNA into chromatin, limiting DNA accessibility to the cellular machineries which require DNA as a template. Histones thereby play a central role in transcription regulation, DNA repair, DNA replication and chromosomal stability. DNA accessibility is regulated via a complex set of post-translational modifications of histones, also called histone code, and nucleosome remodeling. This is Late histone H2A.2.2 from Psammechinus miliaris (Green sea urchin).